A 55-amino-acid polypeptide reads, in one-letter code: Large ribosomal subunit protein bL33 (55 aa).

This sequence belongs to the bacterial ribosomal protein bL33 family.

This is Large ribosomal subunit protein bL33 from Escherichia coli (strain K12 / DH10B).